A 263-amino-acid polypeptide reads, in one-letter code: Putative TATA-binding protein pB263R (263 aa).

It belongs to the asfivirus B263R family.

Functionally, putative TATA-binding protein. This is Putative TATA-binding protein pB263R from African swine fever virus (isolate Tick/Malawi/Lil 20-1/1983) (ASFV).